A 72-amino-acid chain; its full sequence is Prokaryotic ubiquitin-like protein Pup (72 aa).

Over residues M1–Q10 the composition is skewed to gly residues. The disordered stretch occupies residues M1–S41. The stretch at E21 to E61 forms a coiled coil. The interval N28–Y66 is ARC ATPase binding. Basic and acidic residues predominate over residues S31–S41. Residue E72 forms an Isoglutamyl lysine isopeptide (Glu-Lys) (interchain with K-? in acceptor proteins) linkage.

Belongs to the prokaryotic ubiquitin-like protein family. In terms of assembly, strongly interacts with the proteasome-associated ATPase ARC through a hydrophobic interface; the interacting region of Pup lies in its C-terminal half. There is one Pup binding site per ARC hexamer ring.

Its pathway is protein degradation; proteasomal Pup-dependent pathway. Functionally, protein modifier that is covalently attached to lysine residues of substrate proteins, thereby targeting them for proteasomal degradation. The tagging system is termed pupylation. This Frankia alni (strain DSM 45986 / CECT 9034 / ACN14a) protein is Prokaryotic ubiquitin-like protein Pup.